The chain runs to 58 residues: Probable ferredoxin (58 aa).

4Fe-4S ferredoxin-type domains lie at 2-30 (VAKVNVDLCTGCGSCVDECPAAAISLNDD) and 31-58 (GIATVDESECLDCGSCEDACPNNAITIE). The [4Fe-4S] cluster site is built by Cys-10, Cys-13, Cys-16, Cys-20, Cys-40, Cys-43, Cys-46, and Cys-50.

The cofactor is [4Fe-4S] cluster.

Its function is as follows. Ferredoxins are iron-sulfur proteins that transfer electrons in a wide variety of metabolic reactions. In Methanosarcina thermophila, this protein is Probable ferredoxin.